The primary structure comprises 215 residues: 3,4-dihydroxy-2-butanone 4-phosphate synthase (215 aa).

Residues 38–39 (RE), Asp-43, 151–155 (RRGHT), and Glu-175 each bind D-ribulose 5-phosphate. Glu-39 contributes to the Mg(2+) binding site. His-154 serves as a coordination point for Mg(2+).

Belongs to the DHBP synthase family. Homodimer. Requires Mg(2+) as cofactor. Mn(2+) serves as cofactor.

The catalysed reaction is D-ribulose 5-phosphate = (2S)-2-hydroxy-3-oxobutyl phosphate + formate + H(+). The protein operates within cofactor biosynthesis; riboflavin biosynthesis; 2-hydroxy-3-oxobutyl phosphate from D-ribulose 5-phosphate: step 1/1. Catalyzes the conversion of D-ribulose 5-phosphate to formate and 3,4-dihydroxy-2-butanone 4-phosphate. The protein is 3,4-dihydroxy-2-butanone 4-phosphate synthase of Haemophilus influenzae (strain PittGG).